The following is a 209-amino-acid chain: Ribosomal RNA large subunit methyltransferase E (209 aa).

Positions 63, 65, 83, 99, and 124 each coordinate S-adenosyl-L-methionine. Lysine 164 serves as the catalytic Proton acceptor.

It belongs to the class I-like SAM-binding methyltransferase superfamily. RNA methyltransferase RlmE family.

Its subcellular location is the cytoplasm. The enzyme catalyses uridine(2552) in 23S rRNA + S-adenosyl-L-methionine = 2'-O-methyluridine(2552) in 23S rRNA + S-adenosyl-L-homocysteine + H(+). Functionally, specifically methylates the uridine in position 2552 of 23S rRNA at the 2'-O position of the ribose in the fully assembled 50S ribosomal subunit. This is Ribosomal RNA large subunit methyltransferase E from Shewanella baltica (strain OS223).